The sequence spans 334 residues: Cytoplasmic envelopment protein 2 (334 aa).

It belongs to the herpesviridae cytoplasmic envelopment protein 2 family. In terms of assembly, interacts with cytoplasmic envelopment protein 3 and with the capsid.

Its subcellular location is the virion tegument. It is found in the host cytoplasm. The protein resides in the host nucleus. Its function is as follows. Plays a critical role in cytoplasmic virus egress. Participates in the final step of tegumentation and envelope acquisition within the host cytoplasm by directly interacting with the capsid. Upon virion binding to target cell, a signaling cascade is triggered to disrupt the interaction with the capsid, thereby preparing capsid uncoating. The polypeptide is Cytoplasmic envelopment protein 2 (ORF33) (Homo sapiens (Human)).